A 116-amino-acid chain; its full sequence is Large ribosomal subunit protein uL24 (116 aa).

The tract at residues 1–21 is disordered; it reads MATNNGAGKARHKFHVKKGDT.

It belongs to the universal ribosomal protein uL24 family. As to quaternary structure, part of the 50S ribosomal subunit.

In terms of biological role, one of two assembly initiator proteins, it binds directly to the 5'-end of the 23S rRNA, where it nucleates assembly of the 50S subunit. Functionally, one of the proteins that surrounds the polypeptide exit tunnel on the outside of the subunit. The sequence is that of Large ribosomal subunit protein uL24 from Gloeobacter violaceus (strain ATCC 29082 / PCC 7421).